The chain runs to 232 residues: uncharacterized protein (232 aa).

7 consecutive transmembrane segments (helical) span residues 17–37 (FLAK…VFAY), 54–74 (MSFM…SGAL), 84–104 (ALFL…FMIY), 107–127 (GSIV…SVYG), 138–158 (GSYL…NMFF), 161–181 (SGLN…LTAY), and 203–223 (MAVV…LYLL).

This sequence belongs to the BI1 family.

The protein localises to the cell membrane. This is an uncharacterized protein from Borreliella burgdorferi (strain ATCC 35210 / DSM 4680 / CIP 102532 / B31) (Borrelia burgdorferi).